The sequence spans 183 residues: Endoribonuclease YbeY (183 aa).

Residues His-143, His-147, and His-153 each coordinate Zn(2+).

Belongs to the endoribonuclease YbeY family. Zn(2+) is required as a cofactor.

The protein localises to the cytoplasm. Single strand-specific metallo-endoribonuclease involved in late-stage 70S ribosome quality control and in maturation of the 3' terminus of the 16S rRNA. This is Endoribonuclease YbeY from Rickettsia bellii (strain RML369-C).